Reading from the N-terminus, the 137-residue chain is Large ribosomal subunit protein bL17 (137 aa).

The protein belongs to the bacterial ribosomal protein bL17 family. Part of the 50S ribosomal subunit. Contacts protein L32.

This is Large ribosomal subunit protein bL17 from Rickettsia typhi (strain ATCC VR-144 / Wilmington).